The following is a 146-amino-acid chain: Large ribosomal subunit protein uL15 (146 aa).

The disordered stretch occupies residues Met1–Met54.

Belongs to the universal ribosomal protein uL15 family. In terms of assembly, part of the 50S ribosomal subunit.

Functionally, binds to the 23S rRNA. This Mycobacterium ulcerans (strain Agy99) protein is Large ribosomal subunit protein uL15.